The sequence spans 44 residues: Photosystem I reaction center subunit IX (44 aa).

Residues 7–27 (YLSVAPVLTTLWFGSLAGLLI) form a helical membrane-spanning segment.

The protein belongs to the PsaJ family.

The protein resides in the plastid. Its subcellular location is the chloroplast thylakoid membrane. May help in the organization of the PsaE and PsaF subunits. This chain is Photosystem I reaction center subunit IX, found in Nymphaea alba (White water-lily).